We begin with the raw amino-acid sequence, 417 residues long: Gamma-glutamyl phosphate reductase (417 aa).

This sequence belongs to the gamma-glutamyl phosphate reductase family.

It localises to the cytoplasm. It carries out the reaction L-glutamate 5-semialdehyde + phosphate + NADP(+) = L-glutamyl 5-phosphate + NADPH + H(+). The protein operates within amino-acid biosynthesis; L-proline biosynthesis; L-glutamate 5-semialdehyde from L-glutamate: step 2/2. Its function is as follows. Catalyzes the NADPH-dependent reduction of L-glutamate 5-phosphate into L-glutamate 5-semialdehyde and phosphate. The product spontaneously undergoes cyclization to form 1-pyrroline-5-carboxylate. The protein is Gamma-glutamyl phosphate reductase of Klebsiella pneumoniae (strain 342).